Reading from the N-terminus, the 333-residue chain is L-asparagine oxygenase (333 aa).

L-asparagine-binding residues include Glu125 and Asn146. Positions 155 and 157 each coordinate Fe cation. 2 residues coordinate L-asparagine: Glu157 and Asn158. His287 contacts Fe cation. Position 301 (Arg301) interacts with 2-oxoglutarate. Arg305 lines the L-asparagine pocket.

It belongs to the clavaminate synthase family. Requires Fe(2+) as cofactor.

The enzyme catalyses L-asparagine + 2-oxoglutarate + O2 = (2S,3S)-3-hydroxyasparagine + succinate + CO2. It participates in antibiotic biosynthesis; calcium-dependent antibiotic biosynthesis. Functionally, catalyzes the 3-hydroxylation of L-asparagine to (2S,3S)-3-hydroxyasparagine. The 3-hydroxylated asparagine produced is incorporated at position 9 during the biosynthesis of the non-ribosomally synthesized calcium-dependent antibiotic (CDA), a 11-residue acidic lipopeptide lactone. Is able to hydroxylate only free L-asparagine, since it hydroxylates neither a CDA analog with unmodified Asn at position 9 nor a peptidyl-carrier-protein (PCP)-bound asparagine. Is not active toward D-asparagine. This is L-asparagine oxygenase (asnO) from Streptomyces coelicolor (strain ATCC BAA-471 / A3(2) / M145).